Here is a 1403-residue protein sequence, read N- to C-terminus: MRSSPYDRANLIADFDSIRISLASPEKIRSWSHGEVTKPETINYRTFKPERDGLFCARIFGPTQDWECLCGKYKRMKHRGVICDKCGVEVTLARVRRERLGHIELASPCSHVWFFKGLPSRIGHLLDITLRELERVLYFEAYVIVDPGDGTGLSSGEVITDERKRQLDQEFPGKFIAMMGAEGIKELLKKIDVESLSEEIREKMKTEQSQQKKLKHAKRLRVVESFRKSGNKPEWMILDVIPVIPPELRPLVPLDGGRFATSDLNDLYRRVINRNNRLKKLIELHAPDVIVRNEKRMLQEAVDALFDNGRRGRVLRGANNRPLKSLSDTLKGKQGRFRQNLLGKRVDYSGRSVIVVGPDLKLHQCGLPKKMALELFKPFIYHRLEQRGHCTTIKQAKELVEQQDPVVWDILEEVIKDHPIMLNRAPTLHRLGIQAFEPVLVEGKAIKIHPLVCTAFNADFDGDQMAVHIPLSPEAQIEASTLMLSANNILSPAHGGPITIPTQDMVLGCYYLTKSRPGAKGEGRTFASTDDVLIALEMGEVETLTPIKLRYTGKVIDLVHAFDTQNILHTEPIEFIKQYMDTTVGRVILNDNLPQDMPYINGLLKKKGLAQLVQYCYLKFGLHVTVHMLDEIKSLGFLYATRAGISIGIDDMVVPSEKAGLVRDAEKEVVLVENQYQDGAITHGERYNKIIEIWSKVTERVSDEMFTAMEEDDRTGRYLNPIYIMADSGARGSKQQIRQLSGMRGLMAKPSGEIIETPITANFREGLNVLQYFISTHGARKGLADTALKTADSGYLTRRLVDVAQDVIISENDCGTTEGIYVEPIIESGEIIEALRDRIVGRVALEDQKDYEGNVIVGVNQEITEDLAAAIQAAGIERVKIRSVLTCESKRGVCVACYGRNLATGRLVERGEAVGVIAAQSIGEPGTQLTMRTFHIGGTATRINEQSKQDAKSDGFARYIGIQTVRSKVGELIAMNRNGIMAVVDDKGREKERYPAVYGARVLVEDGAPVKSNQVLLEWDPYTFSILTEVSGVVHFKDLIDGLTMQERLDEVTGMSQLVVIDSPDEKRQPMIQVRPEGATGRGSEAKKYLMPTHAHLMVRDGEELHAGDVLAKIPRETTKTKDITGGLPRVVELFEARKPRETAIIAEINGTVKYGEVTKGQRKIYVEGEDGEKREYALPRGVHINVQEGEKVKAGEPLMDGPRDPHDILAVLGEKELQKYLVNEIQEVYRLQGVNINDKHLETISRQMMRWVKVEDIGDTEFLPEEIVDKFKFRTENNKVLEAGGRPAQGKAMLLGITKASLSTDSFISAASFQETTRVLTEAAINGKVDYLRGLKENVIMGRLVPAGTGMEYYRQVKIAGEDVVEEPVAEPLDIIPGYDEETRLQYAGGLPEDTGEESLAE.

4 residues coordinate Zn(2+): Cys-68, Cys-70, Cys-83, and Cys-86. Mg(2+)-binding residues include Asp-459, Asp-461, and Asp-463. Residues Cys-814, Cys-887, Cys-894, and Cys-897 each contribute to the Zn(2+) site.

The protein belongs to the RNA polymerase beta' chain family. In terms of assembly, the RNAP catalytic core consists of 2 alpha, 1 beta, 1 beta' and 1 omega subunit. When a sigma factor is associated with the core the holoenzyme is formed, which can initiate transcription. The cofactor is Mg(2+). Zn(2+) is required as a cofactor.

The catalysed reaction is RNA(n) + a ribonucleoside 5'-triphosphate = RNA(n+1) + diphosphate. Its function is as follows. DNA-dependent RNA polymerase catalyzes the transcription of DNA into RNA using the four ribonucleoside triphosphates as substrates. The protein is DNA-directed RNA polymerase subunit beta' of Solibacter usitatus (strain Ellin6076).